The following is a 366-amino-acid chain: MITLQRTPLFDVYAKYGGKTIDFGGWELPVQFSSIKEEHEAVRTAAGLFDVSHMGEVEVKGVDSLAFLQRVVTNDVSTLKVGGAQYTAMCYENGGTVDDLLIYKRGEEDYLLVINASNIEKDYEWLASHVIGDATVVNVSSEVAQLAIQGPKAEGILQKVVSEDLKEIKFFKFKNNILVDGIPALVSRTGYTGEDGFEIYCKSEDAAKLWEKLLEVGAEEGLKACGLGARDTLRFEATLPLYGQELSKDITPIEAGIGFAVKTNKEADFFGKATLKEQKENGAPRKLVGIEVIERGIPRTHYPVFIGEEKIGEVTSGTQSPTLKKSIGLALIDVKYAAVDTEVEIEIRNKRVKAVVVPTPFYKRSK.

Belongs to the GcvT family. As to quaternary structure, the glycine cleavage system is composed of four proteins: P, T, L and H.

The catalysed reaction is N(6)-[(R)-S(8)-aminomethyldihydrolipoyl]-L-lysyl-[protein] + (6S)-5,6,7,8-tetrahydrofolate = N(6)-[(R)-dihydrolipoyl]-L-lysyl-[protein] + (6R)-5,10-methylene-5,6,7,8-tetrahydrofolate + NH4(+). Functionally, the glycine cleavage system catalyzes the degradation of glycine. The sequence is that of Aminomethyltransferase from Bacillus cereus (strain G9842).